A 1082-amino-acid polypeptide reads, in one-letter code: Neisserial autotransporter lipoprotein NalP (1082 aa).

The first 27 residues, 1–27 (MRTTPTFPTKTFKPTAMALAVATTLSA), serve as a signal peptide directing secretion. Residue cysteine 28 is the site of N-palmitoyl cysteine attachment. Cysteine 28 is lipidated: S-diacylglycerol cysteine. The Peptidase S8 domain maps to 110-482 (NDAYKNLINL…WGLLDAGKAM (373 aa)). Catalysis depends on charge relay system residues aspartate 138, histidine 210, and serine 426. An Autotransporter domain is found at 808-1082 (DGLDHNGTGL…SGRVGVGYRF (275 aa)).

Belongs to the peptidase S8 family. Post-translationally, probably auto-processes to yield a 68-70 kDa form and a C-terminal 30 kDa translocator domain; upon overexpression in situ and in E.coli full-length protein is seen as well as (probably) auto-processed forms of 68-70 kDa and 30 kDa in size, suggesting this may have protease activity.

It is found in the cell outer membrane. The protein resides in the cell surface. The protein localises to the secreted. It localises to the host cytoplasm. Its subcellular location is the host perinuclear region. With respect to regulation, cleavage of host complement factor C3 is inhibited by PMSF. Functionally, major human immunogenic protein, detected in patients recovering from meningitidis. Autotransporter with a secreted protease domain involved in processing other autotransporter proteins including App, IgA, LbpB and NHBA. Probably autoprocesses to release the about 70 kDa passenger domain. Both cell surface protein (Neisserial autotransporter lipoprotein NalP) and the passenger domain cleave human (host) complement factor C3, generating a shorter alpha chain and a longer beta chain than normal. Uptake of a passenger domain fragment (residues 101-784) by human cells increases cell metabolic activity; the serine protease activity is required for this increase. Cleaves human (host) complement factor C3, generating a shorter alpha chain and a longer beta chain than normal. Does not act on mouse or rabbit C3. Cleavage causes C3b degradation by human CFI and CFH, and thus decreases deposition of C3b on the bacteria surface and probably facilitates complement escape. Its function is as follows. Plays a role in extracellular-DNA (eDNA) mediated biofilm formation. In some strains (including cc32 strain MC58) eDNA stimulates biofilm formation. When NalP is not expressed (and no longer processes NHBA or IgA) biofilm formation increases. The polypeptide is Neisserial autotransporter lipoprotein NalP (Neisseria meningitidis serogroup B (strain ATCC BAA-335 / MC58)).